Here is a 919-residue protein sequence, read N- to C-terminus: MDPPPRPRPHRVAVLLLLLLASSPAARAWKKDEFRNCNQTPFCKRARTRAPHSLDAPLSLDAASLAVATDGSLTASLSHPSRLRPLLLRLSALPPHALRLQIDEDYSSNTPPHRRFQVPDVLLPDVEARTLHLPQPKTSAAGVSTFALSSDVDVVVKHDPFELTVRRAGSGAPVLSFNSHGLFDFEPLQESKQEGETWEEQFRSHTDTRPRGPQSITFDVSFYGADFVYGLPEHGSTSLALRPTRGPGAEESEPYRLFNLDVFEYLHESPFGLYGSIPFMIAHGDGPSSGFFWLNAAEMQIDVLAPGWDGASSTENGRIDTLWMAEAGVVDAFFFVGSEPKDVIKQYISVTGTPSMPQQFAVAYHQCRWNYRDEEDVAGVDSGFDEHDIPYDVLWLDIEHTDGKRYFTWDHSAFPNPEVMQGKIADKGRKMVTIVDPHIKRDSSFHLHEEATAKGYYVKDATGKDFDGWCWPGASSYPDMLNPEIREWWADKFSYENYKGSTPTLYIWNDMNEPSVFNGPEVTMPRDAVHYGDVEHRELHNAYGYYFHMATADGLLKRGEGKDRPFVLSRAFFAGSQRYGAIWTGDNSADWDHLKSSIPMVLTLGLTGMTFSGADIGGFFGNPEPDLLVRWYQVGAFYPFFRGHAHHDTKRREPWLFGERRTALMREAIHMRYSLLPYYYTLFREASVTGVPVMRPLWLEFPDDKETYNNGEAFMVGPSLLAQGIYEEGQKSVSVYLPGEELWYDLRNGSPYKGGVSHKLEVSEDSIPSFQRAGAIVPRKDRFRRSSTQMVNDPYTLVIALNSSSAAEGELYVDDGKSYDYQQGAFIHRRFVFADNKLTSMNIAPKNLGNKKFSTECVIERIIILGVSSGSKKAIVEPGNHEVDIELGPISLRSGSSSVAPTVRKPNVRVVDDWTIRIA.

Residues 1-28 form the signal peptide; it reads MDPPPRPRPHRVAVLLLLLLASSPAARA. Asp-510 acts as the Nucleophile in catalysis. Residue Glu-513 is part of the active site. Catalysis depends on Asp-586, which acts as the Proton donor. A glycan (N-linked (GlcNAc...) asparagine) is linked at Asn-802.

This sequence belongs to the glycosyl hydrolase 31 family. As to quaternary structure, heterodimer of a catalytic alpha subunit and a beta subunit.

Its subcellular location is the endoplasmic reticulum. It carries out the reaction N(4)-(alpha-D-Glc-(1-&gt;3)-alpha-D-Man-(1-&gt;2)-alpha-D-Man-(1-&gt;2)-alpha-D-Man-(1-&gt;3)-[alpha-D-Man-(1-&gt;2)-alpha-D-Man-(1-&gt;3)-[alpha-D-Man-(1-&gt;2)-alpha-D-Man-(1-&gt;6)]-alpha-D-Man-(1-&gt;6)]-beta-D-Man-(1-&gt;4)-beta-D-GlcNAc-(1-&gt;4)-beta-D-GlcNAc)-L-asparaginyl-[protein] + H2O = N(4)-(alpha-D-Man-(1-&gt;2)-alpha-D-Man-(1-&gt;2)-alpha-D-Man-(1-&gt;3)-[alpha-D-Man-(1-&gt;2)-alpha-D-Man-(1-&gt;3)-[alpha-D-Man-(1-&gt;2)-alpha-D-Man-(1-&gt;6)]-alpha-D-Man-(1-&gt;6)]-beta-D-Man-(1-&gt;4)-beta-D-GlcNAc-(1-&gt;4)-beta-D-GlcNAc)-L-asparaginyl-[protein] (N-glucan mannose isomer 9A1,2,3B1,2,3) + beta-D-glucose. It catalyses the reaction N(4)-(alpha-D-Glc-(1-&gt;3)-alpha-D-Glc-(1-&gt;3)-alpha-D-Man-(1-&gt;2)-alpha-D-Man-(1-&gt;2)-alpha-D-Man-(1-&gt;3)-[alpha-D-Man-(1-&gt;2)-alpha-D-Man-(1-&gt;3)-[alpha-D-Man-(1-&gt;2)-alpha-D-Man-(1-&gt;6)]-alpha-D-Man-(1-&gt;6)]-beta-D-Man-(1-&gt;4)-beta-D-GlcNAc-(1-&gt;4)-beta-D-GlcNAc)-L-asparaginyl-[protein] + H2O = N(4)-(alpha-D-Glc-(1-&gt;3)-alpha-D-Man-(1-&gt;2)-alpha-D-Man-(1-&gt;2)-alpha-D-Man-(1-&gt;3)-[alpha-D-Man-(1-&gt;2)-alpha-D-Man-(1-&gt;3)-[alpha-D-Man-(1-&gt;2)-alpha-D-Man-(1-&gt;6)]-alpha-D-Man-(1-&gt;6)]-beta-D-Man-(1-&gt;4)-beta-D-GlcNAc-(1-&gt;4)-beta-D-GlcNAc)-L-asparaginyl-[protein] + beta-D-glucose. Its pathway is glycan metabolism; N-glycan metabolism. In terms of biological role, cleaves sequentially the 2 innermost alpha-1,3-linked glucose residues from the Glc(2)Man(9)GlcNAc(2) oligosaccharide precursor of immature glycoproteins. May be required for defense response elicited by pathogen-associated molecular patterns (PAMPs). The polypeptide is Probable glucan 1,3-alpha-glucosidase (Oryza sativa subsp. japonica (Rice)).